The following is a 230-amino-acid chain: Ribonuclease 3 (230 aa).

Residues 8–135 form the RNase III domain; it reads IVELKEKLGI…LIGAVYLQTN (128 aa). Residue Glu48 coordinates Mg(2+). Asp52 is a catalytic residue. Residues Asp121 and Glu124 each contribute to the Mg(2+) site. Glu124 is a catalytic residue. Residues 161 to 230 enclose the DRBM domain; the sequence is DYKTMIQELV…AHFAFQKLSK (70 aa).

This sequence belongs to the ribonuclease III family. As to quaternary structure, homodimer. Mg(2+) is required as a cofactor.

The protein localises to the cytoplasm. It catalyses the reaction Endonucleolytic cleavage to 5'-phosphomonoester.. Functionally, digests double-stranded RNA. Involved in the processing of primary rRNA transcript to yield the immediate precursors to the large and small rRNAs (23S and 16S). Processes some mRNAs, and tRNAs when they are encoded in the rRNA operon. Processes pre-crRNA and tracrRNA of type II CRISPR loci if present in the organism. The polypeptide is Ribonuclease 3 (Natranaerobius thermophilus (strain ATCC BAA-1301 / DSM 18059 / JW/NM-WN-LF)).